Here is a 547-residue protein sequence, read N- to C-terminus: Nuclear speckle splicing regulatory protein 1 (547 aa).

The tract at residues 25–51 (KPSVFGNDSDDDEASVSESLQREAAKK) is disordered. Phosphoserine occurs at positions 27 and 33. Residues 103–177 (IHNLLKAVEI…EARLDVTKQK (75 aa)) adopt a coiled-coil conformation. Positions 105 to 169 (NLLKAVEIRK…REKRAAALEA (65 aa)) are necessary for alternative splicing activity. Positions 188 to 523 (NQAVGEEAVP…KRSNEETVMS (336 aa)) are disordered. Residues K198 and K209 each participate in a glycyl lysine isopeptide (Lys-Gly) (interchain with G-Cter in SUMO2) cross-link. A compositionally biased stretch (basic and acidic residues) spans 200–217 (SFREARTVIKEEKLRGYP). Positions 223–232 (ENRPQQNCAL) are enriched in polar residues. Residues 237 to 254 (EEAEENPDADSDSEESCD) are compositionally biased toward acidic residues. A phosphoserine mark is found at S247 and S252. Over residues 255–269 (DGERGDHKVKSRGEE) the composition is skewed to basic and acidic residues. Position 276 is an N6-acetyllysine (K276). The segment covering 277-287 (YLKHHKNHTHS) has biased composition (basic residues). K279 participates in a covalent cross-link: Glycyl lysine isopeptide (Lys-Gly) (interchain with G-Cter in SUMO2). Positions 308 to 339 (RGHEHKGGQHQDRQSRDQESCHKDRSHREEKS) are enriched in basic and acidic residues. The span at 340–355 (SHRHREASHKDHHWKR) shows a compositional bias: basic residues. Composition is skewed to basic and acidic residues over residues 356–480 (HEHE…KPPR) and 490–506 (RLTE…ERPP). The stretch at 376 to 417 (KREKYSSREQEKDRQWNDHDRYSEKEKKGKEKEEHRKARRER) forms a coiled coil. A Phosphoserine modification is found at S447.

Belongs to the NSRP1 family. Interacts (via C-terminus) with SRSF1. Interacts (via C-terminus) with SRSF2.

The protein localises to the nucleus. The protein resides in the nucleus speckle. RNA-binding protein that mediates pre-mRNA alternative splicing regulation. The chain is Nuclear speckle splicing regulatory protein 1 (Nsrp1) from Rattus norvegicus (Rat).